Here is a 271-residue protein sequence, read N- to C-terminus: (21S)-21-acetoxyl-apo-melianone synthase SDR (271 aa).

Catalysis depends on serine 150, which acts as the Proton donor. The Proton acceptor role is filled by tyrosine 163. Lysine 167 functions as the Proton donor/acceptor in the catalytic mechanism.

Belongs to the short-chain dehydrogenases/reductases (SDR) family. As to expression, mainly expressed in petioles.

It carries out the reaction 21-O-acetyl-isomeliandiol + A = (21S)-21-acetoxyl-apo-melianone + AH2. It functions in the pathway secondary metabolite biosynthesis; terpenoid biosynthesis. Functionally, oxidoreductase involved in the biosynthesis of limonoids triterpene natural products such as azadirachtin, an antifeedant widely used as bioinsecticide, and possessing many medicinal applications including anti-tumoral, anti-malarial, anti-rheumatic, antibacterial, anti-inflammatory, anti-pyretic and diuretic effects. Catalyzes the oxidation of 21-O-acetyl-isomeliandiol to (21S)-21-acetoxyl-apo-melianone. The sequence is that of (21S)-21-acetoxyl-apo-melianone synthase SDR from Melia azedarach (Chinaberry tree).